Here is a 355-residue protein sequence, read N- to C-terminus: 4-hydroxy-3-methylbut-2-en-1-yl diphosphate synthase (flavodoxin) (355 aa).

[4Fe-4S] cluster-binding residues include C266, C269, C301, and E308.

It belongs to the IspG family. [4Fe-4S] cluster is required as a cofactor.

The catalysed reaction is (2E)-4-hydroxy-3-methylbut-2-enyl diphosphate + oxidized [flavodoxin] + H2O + 2 H(+) = 2-C-methyl-D-erythritol 2,4-cyclic diphosphate + reduced [flavodoxin]. It participates in isoprenoid biosynthesis; isopentenyl diphosphate biosynthesis via DXP pathway; isopentenyl diphosphate from 1-deoxy-D-xylulose 5-phosphate: step 5/6. Its function is as follows. Converts 2C-methyl-D-erythritol 2,4-cyclodiphosphate (ME-2,4cPP) into 1-hydroxy-2-methyl-2-(E)-butenyl 4-diphosphate. This chain is 4-hydroxy-3-methylbut-2-en-1-yl diphosphate synthase (flavodoxin), found in Caldanaerobacter subterraneus subsp. tengcongensis (strain DSM 15242 / JCM 11007 / NBRC 100824 / MB4) (Thermoanaerobacter tengcongensis).